Reading from the N-terminus, the 307-residue chain is GTPase Era (307 aa).

In terms of domain architecture, Era-type G spans arginine 17 to glutamate 186. The G1 stretch occupies residues glycine 25–serine 32. Residue glycine 25–serine 32 participates in GTP binding. Residues glutamine 51–asparagine 55 are G2. Positions aspartate 72 to glycine 75 are G3. GTP-binding positions include aspartate 72–phenylalanine 76 and asparagine 133–aspartate 136. A G4 region spans residues asparagine 133 to aspartate 136. Residues valine 165 to alanine 167 form a G5 region. The KH type-2 domain occupies leucine 217 to serine 293.

Belongs to the TRAFAC class TrmE-Era-EngA-EngB-Septin-like GTPase superfamily. Era GTPase family. In terms of assembly, monomer.

It is found in the cytoplasm. The protein localises to the cell inner membrane. An essential GTPase that binds both GDP and GTP, with rapid nucleotide exchange. Plays a role in 16S rRNA processing and 30S ribosomal subunit biogenesis and possibly also in cell cycle regulation and energy metabolism. The protein is GTPase Era of Neisseria meningitidis serogroup C / serotype 2a (strain ATCC 700532 / DSM 15464 / FAM18).